A 135-amino-acid polypeptide reads, in one-letter code: Aspartate 1-decarboxylase (135 aa).

Ser-25 functions as the Schiff-base intermediate with substrate; via pyruvic acid in the catalytic mechanism. Ser-25 bears the Pyruvic acid (Ser) mark. Thr-57 is a substrate binding site. Tyr-58 (proton donor) is an active-site residue. 73 to 75 (GAA) contacts substrate.

This sequence belongs to the PanD family. In terms of assembly, heterooctamer of four alpha and four beta subunits. It depends on pyruvate as a cofactor. Post-translationally, is synthesized initially as an inactive proenzyme, which is activated by self-cleavage at a specific serine bond to produce a beta-subunit with a hydroxyl group at its C-terminus and an alpha-subunit with a pyruvoyl group at its N-terminus.

The protein localises to the cytoplasm. The catalysed reaction is L-aspartate + H(+) = beta-alanine + CO2. It functions in the pathway cofactor biosynthesis; (R)-pantothenate biosynthesis; beta-alanine from L-aspartate: step 1/1. Its function is as follows. Catalyzes the pyruvoyl-dependent decarboxylation of aspartate to produce beta-alanine. The polypeptide is Aspartate 1-decarboxylase (Mycobacterium sp. (strain JLS)).